Consider the following 558-residue polypeptide: uncharacterized protein (558 aa).

12 helical membrane passes run 21-41 (IFCF…LPIA), 69-89 (FLDA…STVV), 100-120 (IVLA…AFLA), 160-180 (IIFL…LFYF), 220-240 (AFQA…IDLI), 251-271 (GLGI…GIGY), 303-323 (VITN…VEFI), 386-406 (VFPV…AMFI), 413-433 (TAGG…VAKF), 454-474 (AFLV…LLPL), 479-499 (PVSF…VGLS), and 519-539 (ALCL…LTFV).

It belongs to the TrkH potassium transport family.

Its subcellular location is the cell membrane. This is an uncharacterized protein from Mycoplasma genitalium (strain ATCC 33530 / DSM 19775 / NCTC 10195 / G37) (Mycoplasmoides genitalium).